Here is a 313-residue protein sequence, read N- to C-terminus: Olfactory receptor 51A2 (313 aa).

Over 1-27 the chain is Extracellular; sequence MSIINTSYVEITTFFLVGMPGLEYAHI. The N-linked (GlcNAc...) asparagine glycan is linked to N5. Residues 28 to 48 form a helical membrane-spanning segment; that stretch reads WISIPICSMYLIAILGNGTIL. Residues 49–56 lie on the Cytoplasmic side of the membrane; that stretch reads FIIKTEPS. The chain crosses the membrane as a helical span at residues 57 to 77; the sequence is LHGPMYYFLSMLAMSDLGLSL. The Extracellular portion of the chain corresponds to 78 to 101; sequence SSLPTVLSIFLFNAPETSSSACFA. An intrachain disulfide couples C99 to C191. Residues 102–122 traverse the membrane as a helical segment; the sequence is QEFFIHGFSVLESSVLLIMSF. The Cytoplasmic segment spans residues 123–141; the sequence is DRFLAIHNPLRYTSILTTV. Residues 142 to 162 traverse the membrane as a helical segment; that stretch reads RVAQIGIVFSFKSMLLVLPFP. The Extracellular portion of the chain corresponds to 163–198; the sequence is FTLRSLRYCKKNQLSHSYCLHQDVMKLACSDNRIDV. Residues 199-218 form a helical membrane-spanning segment; the sequence is IYGFFGALCLMVDFILIAVS. Residues 219–238 are Cytoplasmic-facing; it reads YTLILKTVPGIASKKEELKA. A helical transmembrane segment spans residues 239-259; it reads LNTCVSHICAVIIFYLPIINL. Topologically, residues 260 to 274 are extracellular; the sequence is AVVHRFAGHVSPLIN. A helical transmembrane segment spans residues 275–295; it reads VLMANVLLLVPPLMKPIVYCV. Over 296–313 the chain is Cytoplasmic; the sequence is KTKQIRVRVVAKLCQWKI.

It belongs to the G-protein coupled receptor 1 family.

It localises to the cell membrane. Odorant receptor. This Homo sapiens (Human) protein is Olfactory receptor 51A2 (OR51A2).